Here is a 591-residue protein sequence, read N- to C-terminus: Aspartate--tRNA(Asp/Asn) ligase (591 aa).

Glutamate 175 serves as a coordination point for L-aspartate. An aspartate region spans residues 199-202; it reads QQFK. L-aspartate-binding residues include arginine 221 and histidine 453. 221 to 223 provides a ligand contact to ATP; the sequence is RDE. Glutamate 486 provides a ligand contact to ATP. Arginine 493 contributes to the L-aspartate binding site. Position 538–541 (538–541) interacts with ATP; that stretch reads GIDR.

It belongs to the class-II aminoacyl-tRNA synthetase family. Type 1 subfamily. Homodimer.

It is found in the cytoplasm. The catalysed reaction is tRNA(Asx) + L-aspartate + ATP = L-aspartyl-tRNA(Asx) + AMP + diphosphate. Functionally, aspartyl-tRNA synthetase with relaxed tRNA specificity since it is able to aspartylate not only its cognate tRNA(Asp) but also tRNA(Asn). Reaction proceeds in two steps: L-aspartate is first activated by ATP to form Asp-AMP and then transferred to the acceptor end of tRNA(Asp/Asn). The chain is Aspartate--tRNA(Asp/Asn) ligase from Jannaschia sp. (strain CCS1).